The chain runs to 394 residues: Phosphopentomutase (394 aa).

Residues Asp-13, Asp-286, His-291, Asp-327, His-328, and His-339 each contribute to the Mn(2+) site.

Belongs to the phosphopentomutase family. Mn(2+) serves as cofactor.

Its subcellular location is the cytoplasm. The catalysed reaction is 2-deoxy-alpha-D-ribose 1-phosphate = 2-deoxy-D-ribose 5-phosphate. It catalyses the reaction alpha-D-ribose 1-phosphate = D-ribose 5-phosphate. It functions in the pathway carbohydrate degradation; 2-deoxy-D-ribose 1-phosphate degradation; D-glyceraldehyde 3-phosphate and acetaldehyde from 2-deoxy-alpha-D-ribose 1-phosphate: step 1/2. Functionally, isomerase that catalyzes the conversion of deoxy-ribose 1-phosphate (dRib-1-P) and ribose 1-phosphate (Rib-1-P) to deoxy-ribose 5-phosphate (dRib-5-P) and ribose 5-phosphate (Rib-5-P), respectively. The sequence is that of Phosphopentomutase from Bacillus cereus (strain AH187).